The sequence spans 489 residues: uncharacterized protein (489 aa).

In terms of domain architecture, 2Fe-2S ferredoxin-type spans Ile-2–Phe-84. [2Fe-2S] cluster is bound by residues Cys-48, Cys-53, Cys-56, and Cys-68. 2 4Fe-4S ferredoxin-type domains span residues Lys-123–Pro-155 and Thr-177–Arg-205. Cys-134, Cys-137, Cys-140, Cys-144, Cys-186, Cys-189, Cys-192, and Cys-196 together coordinate [4Fe-4S] cluster.

The protein belongs to the succinate dehydrogenase/fumarate reductase iron-sulfur protein family.

This is an uncharacterized protein from Methanocaldococcus jannaschii (strain ATCC 43067 / DSM 2661 / JAL-1 / JCM 10045 / NBRC 100440) (Methanococcus jannaschii).